Here is a 492-residue protein sequence, read N- to C-terminus: Trichothecene C-15 hydroxylase (492 aa).

The chain crosses the membrane as a helical span at residues 6–26 (LWPLLALSGGTGLAYLVVVVV). A compositionally biased stretch (basic and acidic residues) spans 88–106 (AMKDVRGHRKSGEPEHGKD). Positions 88–116 (AMKDVRGHRKSGEPEHGKDPISVQSNGDN) are disordered. N-linked (GlcNAc...) asparagine glycans are attached at residues asparagine 124, asparagine 198, and asparagine 290. A heme-binding site is contributed by cysteine 438.

Belongs to the cytochrome P450 family. Requires heme as cofactor.

It is found in the membrane. Its pathway is sesquiterpene biosynthesis; trichothecene biosynthesis. Functionally, trichothecene C-15 hydroxylase; part of the core gene cluster that mediates the biosynthesis of trichothecenes, a very large family of chemically related bicyclic sesquiterpene compounds acting as mycotoxins, including T2-toxin. The biosynthesis of trichothecenes begins with the cyclization of farnesyl diphosphate to trichodiene and is catalyzed by the trichodiene synthase TRI5. Trichodiene undergoes a series of oxygenations catalyzed by the cytochrome P450 monooxygenase TRI4. TRI4 controls the addition of four oxygens at C-2, C-3, C-11, and the C-12, C-13-epoxide to form the intermediate isotrichotriol. Isotrichotriol then undergoes a non-enzymatic isomerization and cyclization to form isotrichodermol. During this process, the oxygen at the C-2 position becomes the pyran ring oxygen and the hydroxyl group at C-11 is lost. More complex type A trichothecenes are built by modifying isotrichodermol through a series of paired hydroxylation and acetylation or acylation steps. Isotrichodermol is converted to isotrichodermin by the acetyltransferase TRI101. TRI101 encodes a C-3 transacetylase that acts as a self-protection or resistance factor during biosynthesis and that the presence of a free C-3 hydroxyl group is a key component of Fusarium trichothecene phytotoxicity. A second hydroxyl group is added to C-15 by the trichothecene C-15 hydroxylase TRI11, producing 15-decalonectrin, which is then acetylated by TRI3, producing calonectrin. A third hydroxyl group is added at C-4 by the cytochrome P450 monooxygenase TRI13, converting calonectrin to 3,15-diacetoxyspirpenol, which is subsequently acetylated by the acetyltransferase TRI7. A fourth hydroxyl group is added to C-8 by the cytochrome P450 monooxygenase TRI1, followed by the addition of an isovaleryl moiety by TRI16. Finally, the acetyl group is removed from the C-3 position by the trichothecene C-3 esterase TRI8 to produce T-2 toxin. The chain is Trichothecene C-15 hydroxylase from Fusarium sporotrichioides.